We begin with the raw amino-acid sequence, 127 residues long: Aspartate 1-decarboxylase (127 aa).

Serine 25 serves as the catalytic Schiff-base intermediate with substrate; via pyruvic acid. A Pyruvic acid (Ser) modification is found at serine 25. Residue threonine 57 coordinates substrate. The active-site Proton donor is the tyrosine 58. 73-75 (GAA) contacts substrate.

Belongs to the PanD family. As to quaternary structure, heterooctamer of four alpha and four beta subunits. Requires pyruvate as cofactor. Post-translationally, is synthesized initially as an inactive proenzyme, which is activated by self-cleavage at a specific serine bond to produce a beta-subunit with a hydroxyl group at its C-terminus and an alpha-subunit with a pyruvoyl group at its N-terminus.

It is found in the cytoplasm. The catalysed reaction is L-aspartate + H(+) = beta-alanine + CO2. It functions in the pathway cofactor biosynthesis; (R)-pantothenate biosynthesis; beta-alanine from L-aspartate: step 1/1. In terms of biological role, catalyzes the pyruvoyl-dependent decarboxylation of aspartate to produce beta-alanine. In Vesicomyosocius okutanii subsp. Calyptogena okutanii (strain HA), this protein is Aspartate 1-decarboxylase.